The sequence spans 1025 residues: Multidrug resistance protein MdtC (1025 aa).

12 helical membrane passes run 3–23, 333–353, 360–380, 387–407, 431–451, 463–483, 528–548, 853–873, 875–895, 897–917, 953–973, and 984–1004; these read FFAL…AITL, EVEQ…FLFL, IIPA…MYLC, LSLM…IVVL, VGFT…PLLL, FAVT…TLTP, LVGV…ISIP, VILI…LYES, VHPL…LLAL, LFNA…IGIV, PIMM…LSGG, and ITIV…TPVV.

This sequence belongs to the resistance-nodulation-cell division (RND) (TC 2.A.6) family. MdtC subfamily. In terms of assembly, part of a tripartite efflux system composed of MdtA, MdtB and MdtC. MdtC forms a heteromultimer with MdtB.

It localises to the cell inner membrane. The MdtABC tripartite complex confers resistance against novobiocin and deoxycholate. The protein is Multidrug resistance protein MdtC of Escherichia fergusonii (strain ATCC 35469 / DSM 13698 / CCUG 18766 / IAM 14443 / JCM 21226 / LMG 7866 / NBRC 102419 / NCTC 12128 / CDC 0568-73).